A 376-amino-acid chain; its full sequence is Chaperone protein DnaJ (376 aa).

The J domain occupies 5–69 (DYYEVLGISK…QKRAQYDQYG (65 aa)). The CR-type zinc finger occupies 133-215 (GKDAEIEIPR…CHGKGRVTKT (83 aa)). Zn(2+) is bound by residues Cys-146, Cys-149, Cys-163, Cys-166, Cys-189, Cys-192, Cys-203, and Cys-206. CXXCXGXG motif repeat units lie at residues 146–153 (CDTCHGSG), 163–170 (CSHCGGKG), 189–196 (CQYCNGTG), and 203–210 (CPTCHGKG).

This sequence belongs to the DnaJ family. As to quaternary structure, homodimer. It depends on Zn(2+) as a cofactor.

It is found in the cytoplasm. In terms of biological role, participates actively in the response to hyperosmotic and heat shock by preventing the aggregation of stress-denatured proteins and by disaggregating proteins, also in an autonomous, DnaK-independent fashion. Unfolded proteins bind initially to DnaJ; upon interaction with the DnaJ-bound protein, DnaK hydrolyzes its bound ATP, resulting in the formation of a stable complex. GrpE releases ADP from DnaK; ATP binding to DnaK triggers the release of the substrate protein, thus completing the reaction cycle. Several rounds of ATP-dependent interactions between DnaJ, DnaK and GrpE are required for fully efficient folding. Also involved, together with DnaK and GrpE, in the DNA replication of plasmids through activation of initiation proteins. This Listeria monocytogenes serotype 4a (strain HCC23) protein is Chaperone protein DnaJ.